The following is a 109-amino-acid chain: Spermidine export protein MdtI (109 aa).

A run of 4 helical transmembrane segments spans residues 6–26, 36–56, 64–84, and 88–108; these read WIHA…NVFL, IYGI…SQAV, AYAL…WVLF, and LNNK…LIKL.

Belongs to the drug/metabolite transporter (DMT) superfamily. Small multidrug resistance (SMR) (TC 2.A.7.1) family. MdtI subfamily. Forms a complex with MdtJ.

It localises to the cell inner membrane. Catalyzes the excretion of spermidine. In Klebsiella pneumoniae subsp. pneumoniae (strain ATCC 700721 / MGH 78578), this protein is Spermidine export protein MdtI.